We begin with the raw amino-acid sequence, 382 residues long: Anhydro-N-acetylmuramic acid kinase (382 aa).

22–29 (GTSMDGVD) is an ATP binding site.

It belongs to the anhydro-N-acetylmuramic acid kinase family.

The catalysed reaction is 1,6-anhydro-N-acetyl-beta-muramate + ATP + H2O = N-acetyl-D-muramate 6-phosphate + ADP + H(+). Its pathway is amino-sugar metabolism; 1,6-anhydro-N-acetylmuramate degradation. The protein operates within cell wall biogenesis; peptidoglycan recycling. In terms of biological role, catalyzes the specific phosphorylation of 1,6-anhydro-N-acetylmuramic acid (anhMurNAc) with the simultaneous cleavage of the 1,6-anhydro ring, generating MurNAc-6-P. Is required for the utilization of anhMurNAc either imported from the medium or derived from its own cell wall murein, and thus plays a role in cell wall recycling. In Burkholderia ambifaria (strain ATCC BAA-244 / DSM 16087 / CCUG 44356 / LMG 19182 / AMMD) (Burkholderia cepacia (strain AMMD)), this protein is Anhydro-N-acetylmuramic acid kinase.